The sequence spans 315 residues: tRNA-specific adenosine deaminase subunit tad3 (315 aa).

The CMP/dCMP-type deaminase domain occupies 158 to 299 (KRIESILEDL…AELNHRYLAY (142 aa)). 3 residues coordinate Zn(2+): histidine 211, cysteine 253, and cysteine 256.

The protein belongs to the cytidine and deoxycytidylate deaminase family. ADAT3 subfamily. Heterodimer with Tad2.

The protein resides in the cytoplasm. The protein localises to the nucleus. Functionally, structural subunit of tRNA-specific adenosine deaminase, which deaminates adenosine-34 (the first, also called wobble position of the anticodon) to inosine in many tRNAs. Inosine-34 allows the decoding of 3 different nucleotides at the third position of mRNA codons, as inosine is able to pair with U, C, and A. The wobble inosine tRNA modification is essential for cell cycle progression in the G1/S and G2/M transitions in fission yeast. This chain is tRNA-specific adenosine deaminase subunit tad3 (tad3), found in Schizosaccharomyces pombe (strain 972 / ATCC 24843) (Fission yeast).